Consider the following 599-residue polypeptide: Elongation factor 4 (599 aa).

Residues 2 to 184 (KNIRNFSIIA…RLVRDIPPPE (183 aa)) enclose the tr-type G domain. GTP is bound by residues 14-19 (DHGKST) and 131-134 (NKID).

Belongs to the TRAFAC class translation factor GTPase superfamily. Classic translation factor GTPase family. LepA subfamily.

It localises to the cell inner membrane. It carries out the reaction GTP + H2O = GDP + phosphate + H(+). Required for accurate and efficient protein synthesis under certain stress conditions. May act as a fidelity factor of the translation reaction, by catalyzing a one-codon backward translocation of tRNAs on improperly translocated ribosomes. Back-translocation proceeds from a post-translocation (POST) complex to a pre-translocation (PRE) complex, thus giving elongation factor G a second chance to translocate the tRNAs correctly. Binds to ribosomes in a GTP-dependent manner. The chain is Elongation factor 4 from Klebsiella pneumoniae subsp. pneumoniae (strain ATCC 700721 / MGH 78578).